Here is a 491-residue protein sequence, read N- to C-terminus: Blue-light-activated histidine kinase (491 aa).

In terms of domain architecture, PAS 1 spans 19–92 (EANPFTAAVE…EIIHSALEAE (74 aa)). Cys-69 bears the S-4a-FMN cysteine mark. In terms of domain architecture, PAC spans 93 to 147 (QSVEIDILNYKKSGEPFWNRLHISPVKTENGELHHFVSSQLDVTLELGKLVELEK). The PAS 2 domain occupies 159 to 230 (SSDQLQYIVE…QRSQESFATG (72 aa)). An HWE histidine kinase domain region spans residues 286-368 (EISHRFKNSM…GHRIRTSGPE (83 aa)). Phosphohistidine; by autocatalysis is present on His-289.

In terms of processing, FMN binds covalently to cysteine after exposure to blue light and this bond is spontaneously broken in the dark.

The catalysed reaction is ATP + protein L-histidine = ADP + protein N-phospho-L-histidine.. Its function is as follows. Photosensitive kinase that is involved in increased bacterial virulence upon exposure to light. The chain is Blue-light-activated histidine kinase from Brucella anthropi (strain ATCC 49188 / DSM 6882 / CCUG 24695 / JCM 21032 / LMG 3331 / NBRC 15819 / NCTC 12168 / Alc 37) (Ochrobactrum anthropi).